Consider the following 272-residue polypeptide: Orotidine 5'-phosphate decarboxylase (272 aa).

K92 (proton donor) is an active-site residue.

This sequence belongs to the OMP decarboxylase family. Type 2 subfamily.

It catalyses the reaction orotidine 5'-phosphate + H(+) = UMP + CO2. It functions in the pathway pyrimidine metabolism; UMP biosynthesis via de novo pathway; UMP from orotate: step 2/2. This chain is Orotidine 5'-phosphate decarboxylase (pyrF), found in Deinococcus radiodurans (strain ATCC 13939 / DSM 20539 / JCM 16871 / CCUG 27074 / LMG 4051 / NBRC 15346 / NCIMB 9279 / VKM B-1422 / R1).